A 335-amino-acid polypeptide reads, in one-letter code: Ferrochelatase (335 aa).

Residues histidine 207 and glutamate 288 each contribute to the Fe cation site.

The protein belongs to the ferrochelatase family.

The protein localises to the cytoplasm. The enzyme catalyses heme b + 2 H(+) = protoporphyrin IX + Fe(2+). It functions in the pathway porphyrin-containing compound metabolism; protoheme biosynthesis; protoheme from protoporphyrin-IX: step 1/1. Catalyzes the ferrous insertion into protoporphyrin IX. The sequence is that of Ferrochelatase from Helicobacter pylori (strain HPAG1).